Here is a 458-residue protein sequence, read N- to C-terminus: NADH-quinone oxidoreductase subunit N 1 (458 aa).

14 helical membrane passes run 12-32 (ALIPEITLTGFASLILLAGLL), 37-57 (EVLVWSSVLFLVIFAFFIPSF), 70-90 (FLTIYLKLIIIIGTIISLLVL), 101-121 (FNESIAFILFSALGMMLLVSA), 124-144 (LISFFLSFELMSLSIYVLVGI), 159-179 (FMLGGFSSAIMLFGIAFIYGA), 199-219 (ILIGLGLFIVGLCFKIALVPF), 230-250 (APTPVTAFISTLPKVAILGAF), 266-286 (SNFLIVLSIATMATGNFFALI), 293-313 (MLAYSSIAHAGYIIIGVIVGT), 321-341 (VAYMFIYTLMNIGAFAMVIAF), 361-381 (IAMLIFMFSLTGVPPTAGFIV), 393-413 (GFTWLVVIAVIFTVISAYYYL), and 438-458 (VAILICTIGVTFLGILPLFLI).

Belongs to the complex I subunit 2 family. As to quaternary structure, NDH-1 is composed of 14 different subunits. Subunits NuoA, H, J, K, L, M, N constitute the membrane sector of the complex.

Its subcellular location is the cell inner membrane. It catalyses the reaction a quinone + NADH + 5 H(+)(in) = a quinol + NAD(+) + 4 H(+)(out). NDH-1 shuttles electrons from NADH, via FMN and iron-sulfur (Fe-S) centers, to quinones in the respiratory chain. The immediate electron acceptor for the enzyme in this species is believed to be ubiquinone. Couples the redox reaction to proton translocation (for every two electrons transferred, four hydrogen ions are translocated across the cytoplasmic membrane), and thus conserves the redox energy in a proton gradient. The polypeptide is NADH-quinone oxidoreductase subunit N 1 (Thermodesulfovibrio yellowstonii (strain ATCC 51303 / DSM 11347 / YP87)).